The chain runs to 244 residues: 5-oxoprolinase subunit A (244 aa).

Belongs to the LamB/PxpA family. Forms a complex composed of PxpA, PxpB and PxpC.

It catalyses the reaction 5-oxo-L-proline + ATP + 2 H2O = L-glutamate + ADP + phosphate + H(+). Its function is as follows. Catalyzes the cleavage of 5-oxoproline to form L-glutamate coupled to the hydrolysis of ATP to ADP and inorganic phosphate. This chain is 5-oxoprolinase subunit A, found in Escherichia fergusonii (strain ATCC 35469 / DSM 13698 / CCUG 18766 / IAM 14443 / JCM 21226 / LMG 7866 / NBRC 102419 / NCTC 12128 / CDC 0568-73).